Reading from the N-terminus, the 172-residue chain is 3-phenylpropionate/cinnamic acid dioxygenase subunit beta (172 aa).

This sequence belongs to the bacterial ring-hydroxylating dioxygenase beta subunit family. As to quaternary structure, this dioxygenase system consists of four proteins: the two subunits of the hydroxylase component (HcaE and HcaF), a ferredoxin (HcaC) and a ferredoxin reductase (HcaD).

It catalyses the reaction 3-phenylpropanoate + NADH + O2 + H(+) = 3-(cis-5,6-dihydroxycyclohexa-1,3-dien-1-yl)propanoate + NAD(+). The catalysed reaction is (E)-cinnamate + NADH + O2 + H(+) = (2E)-3-(cis-5,6-dihydroxycyclohexa-1,3-dien-1-yl)prop-2-enoate + NAD(+). It participates in aromatic compound metabolism; 3-phenylpropanoate degradation. Part of the multicomponent 3-phenylpropionate dioxygenase. Converts 3-phenylpropionic acid (PP) and cinnamic acid (CI) into 3-phenylpropionate-dihydrodiol (PP-dihydrodiol) and cinnamic acid-dihydrodiol (CI-dihydrodiol), respectively. This chain is 3-phenylpropionate/cinnamic acid dioxygenase subunit beta, found in Escherichia coli O7:K1 (strain IAI39 / ExPEC).